We begin with the raw amino-acid sequence, 169 residues long: Small ribosomal subunit protein uS5 (169 aa).

Residues 15–79 enclose the S5 DRBM domain; sequence LKEQVVAINR…EAAKKNLRRI (65 aa).

This sequence belongs to the universal ribosomal protein uS5 family. In terms of assembly, part of the 30S ribosomal subunit. Contacts proteins S4 and S8.

Functionally, with S4 and S12 plays an important role in translational accuracy. In terms of biological role, located at the back of the 30S subunit body where it stabilizes the conformation of the head with respect to the body. The protein is Small ribosomal subunit protein uS5 of Solibacter usitatus (strain Ellin6076).